The chain runs to 676 residues: Basic proline-rich protein (676 aa).

Residues 1-16 form the signal peptide; it reads MLPILLSVALLALSSA. Phosphoserine occurs at positions 28 and 30. Positions 29-676 are disordered; it reads NSAEKFLRPP…PRPPPGPPPQ (648 aa). Pro residues-rich tracts occupy residues 36-50, 71-424, and 442-676; these read RPPP…PPPE, GPAP…PPAD, and PPPA…PPPQ. The propeptide occupies 409–457; it reads APPGARPPPPPPPPADEPQQGPAPSGDKPKKKPPPPAGPPPPGPPSPGP.

In terms of tissue distribution, acinar cells and secretory granules of the parotid gland.

It localises to the secreted. The parotid hormone stimulates dentinal fluid transport in teeth. The polypeptide is Basic proline-rich protein (Sus scrofa (Pig)).